Reading from the N-terminus, the 49-residue chain is uncharacterized protein (49 aa).

Residues 17–39 (LLVFDTSLYIPPFMLSFIGYSLS) traverse the membrane as a helical segment.

It is found in the membrane. This is an uncharacterized protein from Saccharomyces cerevisiae (strain ATCC 204508 / S288c) (Baker's yeast).